The primary structure comprises 103 residues: Cystatin-A8 (103 aa).

The interval 1–20 is disordered; it reads MESEEMLAGGLTEPRPATPE. The short motif at 51–55 is the Secondary area of contact element; sequence QVVAG.

It belongs to the cystatin family.

It is found in the cytoplasm. Its function is as follows. This is an intracellular thiol proteinase inhibitor. The sequence is that of Cystatin-A8 from Sus scrofa (Pig).